Consider the following 591-residue polypeptide: Aspartate--tRNA(Asp/Asn) ligase (591 aa).

Residue Glu-174 coordinates L-aspartate. The segment at 198–201 (QLFK) is aspartate. Residue Arg-220 participates in L-aspartate binding. ATP-binding positions include 220-222 (RDE) and Gln-229. An L-aspartate-binding site is contributed by His-450. An ATP-binding site is contributed by Glu-483. Residue Arg-490 participates in L-aspartate binding. Position 535–538 (535–538 (GLDR)) interacts with ATP.

It belongs to the class-II aminoacyl-tRNA synthetase family. Type 1 subfamily. In terms of assembly, homodimer.

Its subcellular location is the cytoplasm. It carries out the reaction tRNA(Asx) + L-aspartate + ATP = L-aspartyl-tRNA(Asx) + AMP + diphosphate. Aspartyl-tRNA synthetase with relaxed tRNA specificity since it is able to aspartylate not only its cognate tRNA(Asp) but also tRNA(Asn). Reaction proceeds in two steps: L-aspartate is first activated by ATP to form Asp-AMP and then transferred to the acceptor end of tRNA(Asp/Asn). The polypeptide is Aspartate--tRNA(Asp/Asn) ligase (Pseudomonas syringae pv. syringae (strain B728a)).